The primary structure comprises 544 residues: Chaperonin GroEL (544 aa).

Residues T30–P33, K51, D87–T91, G415, D480–A482, and D496 each bind ATP.

It belongs to the chaperonin (HSP60) family. As to quaternary structure, forms a cylinder of 14 subunits composed of two heptameric rings stacked back-to-back. Interacts with the co-chaperonin GroES.

The protein resides in the cytoplasm. It carries out the reaction ATP + H2O + a folded polypeptide = ADP + phosphate + an unfolded polypeptide.. Its function is as follows. Together with its co-chaperonin GroES, plays an essential role in assisting protein folding. The GroEL-GroES system forms a nano-cage that allows encapsulation of the non-native substrate proteins and provides a physical environment optimized to promote and accelerate protein folding. This Sulfurihydrogenibium sp. (strain YO3AOP1) protein is Chaperonin GroEL.